A 246-amino-acid polypeptide reads, in one-letter code: 5-oxoprolinase subunit A (246 aa).

This sequence belongs to the LamB/PxpA family. As to quaternary structure, forms a complex composed of PxpA, PxpB and PxpC.

The catalysed reaction is 5-oxo-L-proline + ATP + 2 H2O = L-glutamate + ADP + phosphate + H(+). In terms of biological role, catalyzes the cleavage of 5-oxoproline to form L-glutamate coupled to the hydrolysis of ATP to ADP and inorganic phosphate. In Vibrio cholerae serotype O1 (strain M66-2), this protein is 5-oxoprolinase subunit A.